We begin with the raw amino-acid sequence, 210 residues long: High mobility group protein B2 (210 aa).

At K3 the chain carries N6-acetyllysine. Positions 9–79 (PRGKMSSYAF…RYDREMKNYV (71 aa)) form a DNA-binding region, HMG box 1. C23 carries the post-translational modification Cysteine sulfonic acid (-SO3H); alternate. An intrachain disulfide couples C23 to C45. Residue K30 is modified to N6-acetyllysine. At S35 the chain carries Phosphoserine. K43 carries the post-translational modification N6-acetyllysine. The residue at position 45 (C45) is a Cysteine sulfonic acid (-SO3H); alternate. The disordered stretch occupies residues 71-102 (YDREMKNYVPPKGDKKGKKKDPNAPKRPPSAF). K90 bears the N6-acetyllysine mark. The HMG box 2 DNA-binding region spans 95–163 (PKRPPSAFFL…KYEKDIAAYR (69 aa)). S100 carries the phosphoserine modification. The residue at position 106 (C106) is a Cysteine sulfonic acid (-SO3H). K114 and K141 each carry N6-acetyllysine. The span at 162-172 (YRAKGKSEAGK) shows a compositional bias: basic and acidic residues. The segment at 162-210 (YRAKGKSEAGKKGPGRPTGSKKKNEPEDEEEEEEEEEEEDDEEEEEDEE) is disordered. The segment at 165 to 180 (KGKSEAGKKGPGRPTG) is required for chemotactic activity. Positions 187-210 (PEDEEEEEEEEEEEDDEEEEEDEE) are enriched in acidic residues.

It belongs to the HMGB family. Interacts with POU2F2, POU2F1 and POU3F1. Component of the RAG complex composed of core components RAG1 and RAG2, and associated component HMGB1 or HMGB2. Component of the SET complex, composed of at least ANP32A, APEX1, HMGB2, NME1, SET and TREX1. Directly interacts with SET. Interacts with LEF1. In terms of processing, reduction/oxidation of cysteine residues Cys-23, Cys-45 and Cys-106 and a possible intramolecular disulfide bond involving Cys-23 and Cys-45 give rise to different redox forms with specific functional activities in various cellular compartments: 1- fully reduced HMGB2 (HMGB2C23hC45hC106h), 2- disulfide HMGB2 (HMGB2C23-C45C106h) and 3- sulfonyl HMGB2 (HMGB2C23soC45soC106so). In terms of tissue distribution, widely expressed in embryo. In adult mainly expressed in lymphoid organs and testes. Expressed in primary spermatocytes. Expressed in the superficial zone of articular cartilage.

The protein localises to the nucleus. Its subcellular location is the chromosome. The protein resides in the cytoplasm. It is found in the secreted. Its function is as follows. Multifunctional protein with various roles in different cellular compartments. May act in a redox sensitive manner. In the nucleus is an abundant chromatin-associated non-histone protein involved in transcription, chromatin remodeling and V(D)J recombination and probably other processes. Binds DNA with a preference to non-canonical DNA structures such as single-stranded DNA. Can bent DNA and enhance DNA flexibility by looping thus providing a mechanism to promote activities on various gene promoters by enhancing transcription factor binding and/or bringing distant regulatory sequences into close proximity. Involved in V(D)J recombination by acting as a cofactor of the RAG complex: acts by stimulating cleavage and RAG protein binding at the 23 bp spacer of conserved recombination signal sequences (RSS). Proposed to be involved in the innate immune response to nucleic acids by acting as a cytoplasmic promiscuous immunogenic DNA/RNA sensor which cooperates with subsequent discriminative sensing by specific pattern recognition receptors. In the extracellular compartment acts as a chemokine. Promotes proliferation and migration of endothelial cells implicating AGER/RAGE. Has antimicrobial activity in gastrointestinal epithelial tissues. Involved in inflammatory response to antigenic stimulus coupled with pro-inflammatory activity. May play a role in germ cell differentiation. Involved in modulation of neurogenesis probably by regulation of neural stem proliferation. Involved in articular cartilage surface maintenance implicating LEF1 and the Wnt/beta-catenin pathway. The polypeptide is High mobility group protein B2 (Hmgb2) (Mus musculus (Mouse)).